Here is a 380-residue protein sequence, read N- to C-terminus: MARTGALLLAALALAGCAQACIYKFGTSPDSKATHTGDHWDHSLNGENWEGKDGAGNPWVCKTGRKQSPINVPQYHVLDGKGSKIATGLQTQWSYPDLMSNGSSVQVINNGHTIQVQWTYDYAGHATIAIPAMRNQSNRIVDVLEMRPNDASDRVTAVPTQFHFHSTSEHLLAGKIFPLELHIVHKVTDKLEACKGGCFSVTGILFQLDNGPDNELLEPIFANMPTREGTFTNLPAGTTIKLGELLPSDRDYVTYEGSLTTPPCSEGLLWHVMTQPQRISFGQWNRYRLAVGEKECNSTETDAAHADAGHHHHHHRRLLHNHAHLEEVPAATSEPKHYFRRVMEETENPDAYTCTTVAFGQNFRNAQYANGRTIKLARYE.

The N-terminal stretch at 1–20 (MARTGALLLAALALAGCAQA) is a signal peptide. One can recognise an Alpha-carbonic anhydrase domain in the interval 38–322 (DHWDHSLNGE…HHHRRLLHNH (285 aa)). Cystine bridges form between Cys61–Cys264, Cys194–Cys198, and Cys296–Cys354. N-linked (GlcNAc...) asparagine glycosylation is present at Asn101. His112 serves as the catalytic Proton acceptor. The N-linked (GlcNAc...) asparagine glycan is linked to Asn135. Zn(2+) is bound by residues His163, His165, and His182. 260–261 (TT) contributes to the substrate binding site. Residue Asn297 is glycosylated (N-linked (GlcNAc...) asparagine).

The protein belongs to the alpha-carbonic anhydrase family. Tetramer of two large and two small subunits linked by two disulfide bonds. Zn(2+) is required as a cofactor.

It is found in the periplasm. The enzyme catalyses hydrogencarbonate + H(+) = CO2 + H2O. Reversible hydration of carbon dioxide. The polypeptide is Carbonic anhydrase 2 (CAH2) (Chlamydomonas reinhardtii (Chlamydomonas smithii)).